Consider the following 331-residue polypeptide: Mitochondrial respiration co-chaperone MRJ1 (331 aa).

A mitochondrion-targeting transit peptide spans 1-36 (MLSFQATVRPLAVSSRLHSPAAHIWRRNAHTAAMSD). Residues 35–66 (SDDSLDQGSSSSYGDSASQPHLGKGKGRQDSL) are disordered. The segment covering 40–53 (DQGSSSSYGDSASQ) has biased composition (low complexity). The J domain maps to 83–147 (DPFEVMALDR…SSRSAFLKTG (65 aa)). Residues 203–226 (DGSQGWRPYEDPSKGFSPPTSGPA) form a disordered region. Positions 275-303 (RALAQARYEAATHGHIRREQIRRRVREAE) constitute an IQ domain.

The protein belongs to the DnaJ family. Interacts with QCR2.

Its subcellular location is the mitochondrion. Mitochondrial co-chaperone required for ubiquinol-cytochrome c oxidoreductase (mitochondrial respiratory chain complex III) activity. In Cryptococcus neoformans var. grubii serotype A (strain H99 / ATCC 208821 / CBS 10515 / FGSC 9487) (Filobasidiella neoformans var. grubii), this protein is Mitochondrial respiration co-chaperone MRJ1.